We begin with the raw amino-acid sequence, 676 residues long: LIM domain-containing protein 1 (676 aa).

Residues 54-134 form a mediates nuclear export region; sequence KIHLQQQQQQ…PPYPPQEQRS (81 aa). 2 disordered regions span residues 104–163 and 189–389; these read KPPL…SAFH and KWGD…TSLV. Ser-145 carries the post-translational modification Phosphoserine. Residues 186 to 260 form an interaction with EGLN1/PHD2 region; the sequence is ASPKWGDKPG…IGGRSSEKPT (75 aa). 2 stretches are compositionally biased toward low complexity: residues 201–213 and 232–242; these read GLSVGSGWPSSPG and LSLSSSRSSEG. A phosphoserine mark is found at Ser-233 and Ser-239. Positions 243–253 are enriched in gly residues; that stretch reads SLGGQNSGIGG. Over residues 262–271 the composition is skewed to polar residues; sequence LWSTASSQRV. A phosphoserine mark is found at Ser-272, Ser-277, Ser-304, and Ser-316. The segment covering 343–360 has biased composition (low complexity); the sequence is SYLSSSAPSSSPAGLDGS. The interaction with RB1 stretch occupies residues 404-442; it reads GPLGWSSDGSLGSVLLDSPSSPRVRLPCQPLVPGPELRP. Ser-421 and Ser-424 each carry phosphoserine. LIM zinc-binding domains follow at residues 470-531, 535-595, and 595-664; these read GACV…SGFQ, DRCF…VLAP, and PKCA…RLEK. The necessary for nuclear localization stretch occupies residues 472-676; it reads CVKCSKGVFG…SSTALHQHHF (205 aa).

It belongs to the zyxin/ajuba family. In terms of assembly, interacts (via LIM domains) with TRAF6. Found in a complex with TRAF6, PRKCZ and SQSTM1. Interacts (via LIM domains) SNAI2/SLUG (via SNAG domain) and SCRT1 (via SNAG domain). Interacts with SQSTM1 and RB1. Found in a complex composed of LIMD1, VHL, EGLN1/PHD2, ELOB and CUL2. Interacts with EIF4E, AGO1, AGO2, DCP2, DDX6, LATS1, LATS2, EGLN1/PHD2, EGLN2/PHD1 and EGLN3/PHD3. Interacts (via LIM zinc-binding 2) with isoform 1 and isoform 3 of VHL. Interacts (via LIM domains) with SNAI1 (via SNAG domain). Phosphorylated during mitosis. As to expression, expressed in normal and breast cancer tissues (at protein level). Ubiquitous.

Its subcellular location is the cytoplasm. The protein localises to the nucleus. It localises to the P-body. The protein resides in the cell junction. It is found in the adherens junction. Its subcellular location is the focal adhesion. Adapter or scaffold protein which participates in the assembly of numerous protein complexes and is involved in several cellular processes such as cell fate determination, cytoskeletal organization, repression of gene transcription, cell-cell adhesion, cell differentiation, proliferation and migration. Positively regulates microRNA (miRNA)-mediated gene silencing and is essential for P-body formation and integrity. Acts as a hypoxic regulator by bridging an association between the prolyl hydroxylases and VHL enabling efficient degradation of HIF1A. Acts as a transcriptional corepressor for SNAI1- and SNAI2/SLUG-dependent repression of E-cadherin transcription. Negatively regulates the Hippo signaling pathway and antagonizes phosphorylation of YAP1. Inhibits E2F-mediated transcription, and suppresses the expression of the majority of genes with E2F1-responsive elements. Regulates osteoblast development, function, differentiation and stress osteoclastogenesis. Enhances the ability of TRAF6 to activate adapter protein complex 1 (AP-1) and negatively regulates the canonical Wnt receptor signaling pathway in osteoblasts. May act as a tumor suppressor by inhibiting cell proliferation. In Homo sapiens (Human), this protein is LIM domain-containing protein 1 (LIMD1).